Reading from the N-terminus, the 326-residue chain is Aspartate carbamoyltransferase catalytic subunit (326 aa).

Residues Arg76 and Thr77 each coordinate carbamoyl phosphate. Lys104 serves as a coordination point for L-aspartate. Carbamoyl phosphate is bound by residues Arg126, His156, and Gln159. Positions 189 and 244 each coordinate L-aspartate. Residues Gly285 and Pro286 each contribute to the carbamoyl phosphate site.

This sequence belongs to the aspartate/ornithine carbamoyltransferase superfamily. ATCase family. As to quaternary structure, heterododecamer (2C3:3R2) of six catalytic PyrB chains organized as two trimers (C3), and six regulatory PyrI chains organized as three dimers (R2).

It catalyses the reaction carbamoyl phosphate + L-aspartate = N-carbamoyl-L-aspartate + phosphate + H(+). The protein operates within pyrimidine metabolism; UMP biosynthesis via de novo pathway; (S)-dihydroorotate from bicarbonate: step 2/3. In terms of biological role, catalyzes the condensation of carbamoyl phosphate and aspartate to form carbamoyl aspartate and inorganic phosphate, the committed step in the de novo pyrimidine nucleotide biosynthesis pathway. The sequence is that of Aspartate carbamoyltransferase catalytic subunit from Polynucleobacter asymbioticus (strain DSM 18221 / CIP 109841 / QLW-P1DMWA-1) (Polynucleobacter necessarius subsp. asymbioticus).